A 977-amino-acid polypeptide reads, in one-letter code: Myb-like protein I (977 aa).

A disordered region spans residues 1 to 122 (MMNNQSMVRY…QQQQQQLDKS (122 aa)). A compositionally biased stretch (pro residues) spans 21-39 (PSPPVYSPIYRSPPPPPQP). The span at 52 to 68 (DNSHHQVMDNSDHEQQQ) shows a compositional bias: basic and acidic residues. Residues 75 to 118 (QQQQQQQHHHQQQQQQQHHQQQQQQHHQQQQQHHHQQQQQQQQQ) are compositionally biased toward low complexity. In terms of domain architecture, HTH myb-type spans 167-222 (EKKKQSRYWTPEEHSRFIEALSKYGHKDVKSISQYVSTRNPTQVRTHAQKYFLRID). The segment at residues 195–218 (VKSISQYVSTRNPTQVRTHAQKYF) is a DNA-binding region (H-T-H motif). 5 disordered regions span residues 229 to 331 (LESK…SSPL), 422 to 516 (INNN…SSQP), 531 to 650 (NNNN…QQQM), 738 to 853 (LNSN…WPGP), and 872 to 960 (NYVP…GMNQ). Positions 241–252 (KDDDWLREEYND) are enriched in acidic residues. Residues 254 to 275 (GSPTQYSSCSNSPTTNSVANPF) are compositionally biased toward polar residues. Low complexity-rich tracts occupy residues 276-329 (SNSL…GNSS) and 422-504 (INNN…INNN). The segment covering 505-516 (GPNSPNLLSSQP) has biased composition (polar residues). The span at 738–754 (LNSNSGNSSPNISSING) shows a compositional bias: low complexity. A compositionally biased stretch (polar residues) spans 783-797 (LSGSPSHSPAQSPHY). 2 stretches are compositionally biased toward low complexity: residues 798–848 (NLNN…SHSI) and 887–943 (SPHF…GSGS). Residues 944–960 (WHQYQATDSPTGWGMNQ) show a composition bias toward polar residues.

Its subcellular location is the nucleus. In Dictyostelium discoideum (Social amoeba), this protein is Myb-like protein I (mybI).